The following is an 88-amino-acid chain: Mitochondrial import inner membrane translocase subunit Tim10 (88 aa).

Positions 29 to 54 (CHRKCVPPHYKEAELSKGEAVCLDRC) match the Twin CX3C motif motif. Disulfide bonds link C29–C54 and C33–C50.

It belongs to the small Tim family. In terms of assembly, heterohexamer; composed of 3 copies of TIMM9 and 3 copies of TIMM10/TIM10A, named soluble 70 kDa complex. The complex forms a 6-bladed alpha-propeller structure and associates with the TIMM22 component of the TIM22 complex. Interacts with multi-pass transmembrane proteins in transit.

Its subcellular location is the mitochondrion inner membrane. Functionally, mitochondrial intermembrane chaperone that participates in the import and insertion of multi-pass transmembrane proteins into the mitochondrial inner membrane. May also be required for the transfer of beta-barrel precursors from the TOM complex to the sorting and assembly machinery (SAM complex) of the outer membrane. Acts as a chaperone-like protein that protects the hydrophobic precursors from aggregation and guide them through the mitochondrial intermembrane space. In Danio rerio (Zebrafish), this protein is Mitochondrial import inner membrane translocase subunit Tim10 (timm10).